Consider the following 488-residue polypeptide: MDSNFLWPMLAMFLGSLVVMFGFLKKINEWYYVGRLGEKKNSLPPGEMGWPLLGNMLSLIKAFRSSDPDSFIHCLVDRYGRTGVYKSHLFWSPSIVVCTPETCKHVLMDNEKFGRGNPESTKELLGKQTVSLSTEEHKRLRKLTTNPFRGDKALTMYVGYIEDIVIDMLDELGSINKPVVFLFEMRKLAFKVIGHIVFGTTSDHLLELMEKYYTDLLLGLRSPAINIPGFAFHGALKARKLLVKLLEEVLEERKKRSGIEQKKGQKGMIDLLLEAEDENGKKLEDVHIIDLLIINLLAGHESSAHASMWAVLYLNQHPEMLQKAKQEQEEIIKRRPSTQKGLTLEEIKQMDYLAKVIDETMRRSSLFIPIFREAKVDANIQGYTVPKGWQVLVWTRGVHMDPEVYTNPKEFDPSRWDNHTTKPGSYIPFGGGPWICPGADLTKLEIYIFLHYFLLNYKLELQNPECPVAYLPVPRPSDNCLAKVIRVG.

Residues 4 to 24 traverse the membrane as a helical segment; that stretch reads NFLWPMLAMFLGSLVVMFGFL. Cysteine 436 provides a ligand contact to heme.

This sequence belongs to the cytochrome P450 family. Heme serves as cofactor. Accumulates in mature fruits and in juice vesicles.

It localises to the membrane. The enzyme catalyses melianol + reduced [NADPH--hemoprotein reductase] + O2 = 7,8-epoxymelianol + oxidized [NADPH--hemoprotein reductase] + H2O + H(+). The protein operates within secondary metabolite biosynthesis; terpenoid biosynthesis. Functionally, monooxygenase involved in the biosynthesis of limonoids triterpene natural products such as limonin, a compound with insecticidal activity responsible for the bitter taste in citrus. Catalyzes the epoxidation of melianol to produce 7,8-epoxymelianol. This Citrus sinensis (Sweet orange) protein is 7,8-epoxymelianol synthase CYP88A51.